The chain runs to 85 residues: Cell division topological specificity factor (85 aa).

The protein belongs to the MinE family.

Its function is as follows. Prevents the cell division inhibition by proteins MinC and MinD at internal division sites while permitting inhibition at polar sites. This ensures cell division at the proper site by restricting the formation of a division septum at the midpoint of the long axis of the cell. This Thioalkalivibrio sulfidiphilus (strain HL-EbGR7) protein is Cell division topological specificity factor.